A 1166-amino-acid polypeptide reads, in one-letter code: Reverse gyrase 2 (1166 aa).

Residues 1-40 (MINVMYKNSCPNCGGDISGDRLLNGLPCEACLPYINGIDD) form an RG N-terminal-type zinc finger. Zn(2+) is bound by residues Cys-10, Cys-13, Cys-28, and Cys-31. Residues Gln-92 and 109–116 (APTGLGKT) each bind ATP. Residues 96–285 (LRRLASNQSF…ALRLLTGFEP (190 aa)) enclose the Helicase ATP-binding domain. The DEAD box signature appears at 190–193 (DDAD). Positions 576-1166 (FNISTGLLIV…VNPLKSEQNV (591 aa)) are topoisomerase I. In terms of domain architecture, Toprim spans 580–743 (TGLLIVESPT…NVYRVVYHEI (164 aa)). Glu-586 is a Mg(2+) binding site. An RG C-terminal-type zinc finger spans residues 662–689 (IKKCLDCNKIFSSASDKCPYCGSANLQS). Zn(2+) is bound by residues Cys-665, Cys-668, Cys-679, and Cys-682. Asp-712 contributes to the Mg(2+) binding site. Positions 759–1157 (NTNLVMSQIV…EIFSEISTLV (399 aa)) constitute a Topo IA-type catalytic domain. Tyr-903 (O-(5'-phospho-DNA)-tyrosine intermediate) is an active-site residue.

The protein in the N-terminal section; belongs to the DEAD box helicase family. DDVD subfamily. This sequence in the C-terminal section; belongs to the type IA topoisomerase family. Monomer. Zn(2+) serves as cofactor. Requires Mg(2+) as cofactor.

It is found in the cytoplasm. It catalyses the reaction ATP + H2O = ADP + phosphate + H(+). Its activity is regulated as follows. At least one of the 2 proteins is inhibited by actinomycin D. Less sensitive to NaCl than TopR1, maximal positive supercoiling is observed with 100 mM NaCl; as NaCl rises higher than 400 mM supercoiling decreases. At 600 mM NaCl relaxes but does not introduce positive supercoils into negatively supercoiled substrate. Modifies the topological state of DNA by introducing positive supercoils in an ATP-dependent process. A highly processive enzyme, it introduces a large number of positive supercoils directly in a negatively supercoiled substrate. At 75 degrees Celsius introduces more than 23 positive supercoils into pTZ18R DNA (probably 2860 bp), more than TopR1; unlike TopR1 little to no relaxation of the negatively supercoiled substrate is seen in the presence of ATP, in the absence of ATP no activity is seen. At 45 degrees Celsius the enzyme is slower and in vitro individual steps can be detected. It cleaves transiently a single DNA strand and remains covalently bound to the 5' DNA end through a tyrosine residue. May be involved in DNA damage response. May be involved in rewinding the DNA strands in the regions of the chromosome that have opened up to allow transcription or replication. Its function is as follows. There are 2 genes for this protein in the cell. During exponential growth this is the more highly expressed isoform (about 125 molecules per cell at 80 degrees Celsius, about 117 molecules at 88 degrees Celsius); this isoform is less active at higher temperature. Grows actively at both 80 and 88 degrees Celsius; survives a long exposure at 45 degrees Celsius without DNA replication or cell division occurring. Experiments using whole cell extracts do not distinguish which isoform is present, the results are probably a mixture of the two forms. The polypeptide is Reverse gyrase 2 (Saccharolobus solfataricus (strain ATCC 35092 / DSM 1617 / JCM 11322 / P2) (Sulfolobus solfataricus)).